Consider the following 367-residue polypeptide: Cell division protein FtsZ (367 aa).

GTP-binding positions include 17-21, 104-106, Glu-135, Lys-139, and Asp-183; these read GGGSN and GTG.

Belongs to the FtsZ family. In terms of assembly, homodimer. Polymerizes to form a dynamic ring structure in a strictly GTP-dependent manner. Interacts directly with several other division proteins.

The protein resides in the cytoplasm. Essential cell division protein that forms a contractile ring structure (Z ring) at the future cell division site. The regulation of the ring assembly controls the timing and the location of cell division. One of the functions of the FtsZ ring is to recruit other cell division proteins to the septum to produce a new cell wall between the dividing cells. Binds GTP and shows GTPase activity. In Aquifex aeolicus (strain VF5), this protein is Cell division protein FtsZ.